We begin with the raw amino-acid sequence, 471 residues long: L-amino acid dehydrogenase (471 aa).

Residue Gly-31 coordinates Mg(2+). Residue Ser-33 coordinates FAD. Mg(2+) is bound at residue Gly-34. Residues Glu-52, Arg-60, and Val-256 each contribute to the FAD site. Ala-283 lines the Mg(2+) pocket. Phe-453 contributes to the FAD binding site.

Belongs to the flavin monoamine oxidase family. The cofactor is FAD. It depends on Mg(2+) as a cofactor.

Its subcellular location is the cellular thylakoid membrane. The enzyme catalyses a plastoquinone + an L-alpha-amino acid + H2O = a plastoquinol + a 2-oxocarboxylate + NH4(+). It catalyses the reaction a plastoquinone + L-arginine + H2O = a plastoquinol + 5-guanidino-2-oxopentanoate + NH4(+). The protein operates within amino-acid degradation; L-arginine degradation. Its activity is regulated as follows. Inhibited by Ca(2+) and other cations such as Ni(2+), Co(2+) and Zn(2+). The inhibition by o-phenanthroline and salicylhydroxamic acid suggests the presence of a metal cofactor besides FAD in the enzyme. The L-arginine-stimulated O(2) consumption involving slr0782 is inhibited by inhibitors of the respiratory electron transport chain, such as KCN and 2,5-dibromo-3-methyl-6-isopropyl-p-benzoquinone, which indicates a participation of the cytochrome b6/f complex and of a cytochrome oxidase. Its function is as follows. L-amino acid dehydrogenase with broad substrate specificity. Catalyzes the oxidative deamination of various L-amino acids, L-Arg and L-Cys being the best substrates in vitro. Likely functions mainly as an L-arginine dehydrogenase in vivo. Probably feeds electrons from L-arginine oxidation and also from the oxidation of other L-amino acids into the respiratory electron transport chain associated to the thylakoid membrane, and does not directly interact with molecular oxygen but donates electrons to the plastoquinone pool. Cannot use D-amino acids as substrates. The sequence is that of L-amino acid dehydrogenase from Synechocystis sp. (strain ATCC 27184 / PCC 6803 / Kazusa).